A 439-amino-acid chain; its full sequence is Histidine--tRNA ligase (439 aa).

Belongs to the class-II aminoacyl-tRNA synthetase family. In terms of assembly, homodimer.

It localises to the cytoplasm. The catalysed reaction is tRNA(His) + L-histidine + ATP = L-histidyl-tRNA(His) + AMP + diphosphate + H(+). The sequence is that of Histidine--tRNA ligase from Leptospira borgpetersenii serovar Hardjo-bovis (strain L550).